Here is a 349-residue protein sequence, read N- to C-terminus: ATPase GET3 (349 aa).

26 to 33 (KGGVGKTT) serves as a coordination point for ATP. D57 is an active-site residue. E243 and N270 together coordinate ATP. Residues C280 and C283 each contribute to the Zn(2+) site.

Belongs to the arsA ATPase family. In terms of assembly, homodimer. Component of the Golgi to ER traffic (GET) complex, which is composed of GET1, GET2 and GET3. Within the complex, GET1 and GET2 form a heterotetramer which is stabilized by phosphatidylinositol binding and which binds to the GET3 homodimer. Interacts with the chloride channel protein GEF1.

It is found in the cytoplasm. The protein resides in the endoplasmic reticulum. It localises to the golgi apparatus. Functionally, ATPase required for the post-translational delivery of tail-anchored (TA) proteins to the endoplasmic reticulum. Recognizes and selectively binds the transmembrane domain of TA proteins in the cytosol. This complex then targets to the endoplasmic reticulum by membrane-bound receptors GET1 and GET2, where the tail-anchored protein is released for insertion. This process is regulated by ATP binding and hydrolysis. ATP binding drives the homodimer towards the closed dimer state, facilitating recognition of newly synthesized TA membrane proteins. ATP hydrolysis is required for insertion. Subsequently, the homodimer reverts towards the open dimer state, lowering its affinity for the GET1-GET2 receptor, and returning it to the cytosol to initiate a new round of targeting. Cooperates with the HDEL receptor ERD2 to mediate the ATP-dependent retrieval of resident ER proteins that contain a C-terminal H-D-E-L retention signal from the Golgi to the ER. Involved in low-level resistance to the oxyanions arsenite and arsenate, and in heat tolerance. This is ATPase GET3 from Clavispora lusitaniae (strain ATCC 42720) (Yeast).